A 374-amino-acid chain; its full sequence is Pectate lyase 3 (374 aa).

An N-terminal signal peptide occupies residues 1–22; that stretch reads MKYLLPSTAAGLLLLAAQPTMA. C93 and C176 are joined by a disulfide. Residues D150, D152, E187, and D191 each contribute to the Ca(2+) site. The active site involves R239. Cysteines 350 and 373 form a disulfide.

It belongs to the polysaccharide lyase 1 family. PLADES subfamily. Requires Ca(2+) as cofactor.

The protein resides in the secreted. The enzyme catalyses Eliminative cleavage of (1-&gt;4)-alpha-D-galacturonan to give oligosaccharides with 4-deoxy-alpha-D-galact-4-enuronosyl groups at their non-reducing ends.. It participates in glycan metabolism; pectin degradation; 2-dehydro-3-deoxy-D-gluconate from pectin: step 2/5. In terms of biological role, involved in maceration and soft-rotting of plant tissue. This chain is Pectate lyase 3 (pel3), found in Pectobacterium atrosepticum (strain SCRI 1043 / ATCC BAA-672) (Erwinia carotovora subsp. atroseptica).